A 453-amino-acid polypeptide reads, in one-letter code: Lysine histidine transporter-like 1 (453 aa).

Residues 1–44 are Cytoplasmic-facing; it reads MYIQMTDGVPPPPEQSSLDHRIDELERQKEIDDWLPITSSRNAK. 2 helical membrane passes run 45-65 and 66-86; these read WWYS…LGLP and FFMA…SWII. Residues 87–122 are Cytoplasmic-facing; it reads TLYTLWQMVEMHEMVPGKRFDRYHELGQFAFGERLG. Residues 123-143 traverse the membrane as a helical segment; that stretch reads LYIIVPQQIIVEVGVCIVYMV. Over 144 to 164 the chain is Extracellular; that stretch reads TGGQSLKKFHEIACQDCSPIR. The helical transmembrane segment at 165–185 threads the bilayer; that stretch reads LSFFIMIFASSHFVLSHLPNF. Residues 186–187 lie on the Cytoplasmic side of the membrane; sequence NS. Residues 188-208 traverse the membrane as a helical segment; it reads ISGVSLVAAVMSLSYSTIAWT. Topologically, residues 209–231 are extracellular; the sequence is ATAAKGVQEDVQYGYKSGTTAST. Residues 232-252 traverse the membrane as a helical segment; the sequence is VLSFFTGLGGIAFAYAGHNVV. The Cytoplasmic portion of the chain corresponds to 253 to 276; the sequence is LEIQATIPSTPSNPSKGPMWRGVV. A helical membrane pass occupies residues 277–297; it reads VAYVVVALCYFPVALVGYGVF. The Extracellular portion of the chain corresponds to 298–318; that stretch reads GNAVLDNVLMSLETPVWAIAT. The helical transmembrane segment at 319–339 threads the bilayer; the sequence is ANLFVVMHVIGSYQIFAMPVF. Over 340–359 the chain is Cytoplasmic; sequence DMVETFLVKKLNFKPSTVLR. Residues 360-382 form a helical membrane-spanning segment; it reads FIVRNVYVALTMFIGIMIPFFGG. Over 383 to 385 the chain is Extracellular; that stretch reads LLA. The helical transmembrane segment at 386–408 threads the bilayer; that stretch reads FFGGFAFAPTSYFLPCIMWLLIY. Residues 409 to 412 lie on the Cytoplasmic side of the membrane; sequence KPKR. A helical transmembrane segment spans residues 413 to 433; the sequence is FSLSWWTNWVCIVLGVVLMIL. Over 434-453 the chain is Extracellular; the sequence is SSIGGLRQIIIQSKDYSFFS.

Belongs to the amino acid/polyamine transporter 2 family. Amino acid/auxin permease (AAAP) (TC 2.A.18.2) subfamily.

The protein resides in the cell membrane. Functionally, amino acid transporter. This Arabidopsis thaliana (Mouse-ear cress) protein is Lysine histidine transporter-like 1.